A 414-amino-acid chain; its full sequence is MRLRFWLLIWLLLGFISHQPTPVINSLAVYRHRETDFGVGVRDHPGQHGKTPSPQKLDNLIIIIIGFLRRYTFNVLFCTSCLCVSFLKTIFWSRNGHDGSMDVQQRAWRSNRSRQKGLRSICMHTKKRVSSFRGNKIGLKDVITLRRHVETKVRAKIRKRKVTTKINRHDKINGKRKTARKQKMFQRAQELRRRAEDYHKCKIPPSARKPLCNWVRMAAAEHCHSSGLPYWLYLTAETLKNRMGRQPPPPTQQHSITDNSLSLKTPPECLLTPLPPSVDDNIKECPLAPLPPSPLPPSVDDNLKECLFVPLPPSPLPPSVDDNLKECLFVPLPPSPLPPSVDDNLKTPPLATQEAEVEKPPKPKRWRVDEVEQSPKPKRQREAEAQQLPKPKRRRLSKLRTRHCTQAWAIRINP.

Positions 1-18 are cleaved as a signal peptide; it reads MRLRFWLLIWLLLGFISH. Asparagine 111 carries an N-linked (GlcNAc...) asparagine glycan. Disordered stretches follow at residues 242-262 and 335-402; these read RMGR…NSLS and SPLP…LRTR. Over residues 252-262 the composition is skewed to polar residues; that stretch reads QQHSITDNSLS. The span at 356–384 shows a compositional bias: basic and acidic residues; it reads EVEKPPKPKRWRVDEVEQSPKPKRQREAE. Residues 390–402 are compositionally biased toward basic residues; that stretch reads KPKRRRLSKLRTR.

This sequence belongs to the NPIP family.

The protein localises to the secreted. This Homo sapiens (Human) protein is Nuclear pore complex-interacting protein family member B7 (NPIPB7).